The sequence spans 369 residues: DNA replication and repair protein RecF (369 aa).

An ATP-binding site is contributed by 30-37 (GINAQGKT).

This sequence belongs to the RecF family.

The protein localises to the cytoplasm. Functionally, the RecF protein is involved in DNA metabolism; it is required for DNA replication and normal SOS inducibility. RecF binds preferentially to single-stranded, linear DNA. It also seems to bind ATP. The protein is DNA replication and repair protein RecF of Macrococcus caseolyticus (strain JCSC5402) (Macrococcoides caseolyticum).